Reading from the N-terminus, the 198-residue chain is Proteasome subunit beta 2 (198 aa).

The propeptide at 1–4 (MVLA) is removed in mature form; by autocatalysis. Threonine 5 functions as the Nucleophile in the catalytic mechanism.

It belongs to the peptidase T1B family. As to quaternary structure, the 20S proteasome core is composed of 14 alpha and 14 beta subunits that assemble into four stacked heptameric rings, resulting in a barrel-shaped structure. The two inner rings, each composed of seven catalytic beta subunits, are sandwiched by two outer rings, each composed of seven alpha subunits. The catalytic chamber with the active sites is on the inside of the barrel. Has a gated structure, the ends of the cylinder being occluded by the N-termini of the alpha-subunits. Is capped at one or both ends by the proteasome regulatory ATPase, PAN.

It is found in the cytoplasm. The catalysed reaction is Cleavage of peptide bonds with very broad specificity.. With respect to regulation, the formation of the proteasomal ATPase PAN-20S proteasome complex, via the docking of the C-termini of PAN into the intersubunit pockets in the alpha-rings, triggers opening of the gate for substrate entry. Interconversion between the open-gate and close-gate conformations leads to a dynamic regulation of the 20S proteasome proteolysis activity. Functionally, component of the proteasome core, a large protease complex with broad specificity involved in protein degradation. This chain is Proteasome subunit beta 2, found in Korarchaeum cryptofilum (strain OPF8).